We begin with the raw amino-acid sequence, 761 residues long: Disintegrin and metalloproteinase domain-containing protein 24 (761 aa).

The first 34 residues, 1–34 (MVAMSEALVHARITLLQAWLRMLLFSSVWPPTWC), serve as a signal peptide directing secretion. Residues 35–200 (AEYKGPPETV…GKSTRMQSIY (166 aa)) constitute a propeptide that is removed on maturation. The Extracellular segment spans residues 35–697 (AEYKGPPETV…SKKDAPEKPN (663 aa)). A glycan (N-linked (GlcNAc...) asparagine) is linked at asparagine 140. Positions 172 to 179 (MRCGLTDE) match the Cysteine switch motif. Cysteine 174 serves as a coordination point for Zn(2+). One can recognise a Peptidase M12B domain in the interval 208-400 (LYIKLALVID…KSCIHREPRP (193 aa)). Asparagine 227 and asparagine 301 each carry an N-linked (GlcNAc...) asparagine glycan. Disulfide bonds link cysteine 323–cysteine 393, cysteine 357–cysteine 379, cysteine 359–cysteine 364, cysteine 465–cysteine 485, cysteine 635–cysteine 646, cysteine 640–cysteine 652, and cysteine 654–cysteine 663. Histidine 342 is a Zn(2+) binding site. Residue glutamate 343 is part of the active site. Residues histidine 346 and histidine 352 each contribute to the Zn(2+) site. 3 N-linked (GlcNAc...) asparagine glycosylation sites follow: asparagine 378, asparagine 390, and asparagine 479. The region spanning 406–493 (LKVCGNGIVE…ECPEDLFVQD (88 aa)) is the Disintegrin domain. The region spanning 631-664 (WVNDCTPETCNMKGVCNNKQHCHCDVGWSPPNCQ) is the EGF-like domain. The helical transmembrane segment at 698 to 718 (VIIWLLPIICVAVVLSVLFCL) threads the bilayer. Topologically, residues 719-761 (SGATKKSREAAASQPAEERVKPPYEGAEPSYETVKPPDEWANP) are cytoplasmic. Residues 725–761 (SREAAASQPAEERVKPPYEGAEPSYETVKPPDEWANP) are disordered.

Monomer. The cofactor is Zn(2+). The prodomain is removed during sperm passage through the caput epididymis after the protein has reached the cell surface. Not processed in the secretory pathway. As to expression, expressed exclusively in testis and more specifically on the surface of mature sperm (at protein level).

Its subcellular location is the membrane. Functionally, plasma membrane protease present on mature sperm that may be involved in sperm function during epididymal maturation and/or fertilization. The sequence is that of Disintegrin and metalloproteinase domain-containing protein 24 from Mus musculus (Mouse).